An 875-amino-acid chain; its full sequence is DNA gyrase subunit A (875 aa).

One can recognise a Topo IIA-type catalytic domain in the interval 34–533 (LPDVRDGLKP…NSADINLEDL (500 aa)). Y122 (O-(5'-phospho-DNA)-tyrosine intermediate) is an active-site residue. The short motif at 560-566 (QRRGGKG) is the GyrA-box element. The segment at 841–875 (EPVDEEDLDTIDGSAAEGDDEIAPEVDVDDEPEEE) is disordered. The segment covering 857–875 (EGDDEIAPEVDVDDEPEEE) has biased composition (acidic residues).

The protein belongs to the type II topoisomerase GyrA/ParC subunit family. As to quaternary structure, heterotetramer, composed of two GyrA and two GyrB chains. In the heterotetramer, GyrA contains the active site tyrosine that forms a transient covalent intermediate with DNA, while GyrB binds cofactors and catalyzes ATP hydrolysis.

Its subcellular location is the cytoplasm. It catalyses the reaction ATP-dependent breakage, passage and rejoining of double-stranded DNA.. Functionally, a type II topoisomerase that negatively supercoils closed circular double-stranded (ds) DNA in an ATP-dependent manner to modulate DNA topology and maintain chromosomes in an underwound state. Negative supercoiling favors strand separation, and DNA replication, transcription, recombination and repair, all of which involve strand separation. Also able to catalyze the interconversion of other topological isomers of dsDNA rings, including catenanes and knotted rings. Type II topoisomerases break and join 2 DNA strands simultaneously in an ATP-dependent manner. The sequence is that of DNA gyrase subunit A from Shigella flexneri.